A 201-amino-acid chain; its full sequence is Esterase TesA (201 aa).

Residues 1 to 21 (MRALLLSGCLALVLLTQQAAA) form the signal peptide. Residue Ser-30 is the Nucleophile of the active site. Catalysis depends on residues Asp-177 and His-180.

This sequence belongs to the 'GDSL' lipolytic enzyme family.

It localises to the secreted. It catalyses the reaction a carboxylic ester + H2O = an alcohol + a carboxylate + H(+). Its function is as follows. Esterase that exhibits the highest activity towards Tween detergents and p-nitrophenyl esters of short acyl chain length. Also displays a low thioesterase activity towards palmitoyl-coenzyme A, but is not active towards acetyl-coenzyme A. This is Esterase TesA (tesA) from Pseudomonas aeruginosa (strain ATCC 15692 / DSM 22644 / CIP 104116 / JCM 14847 / LMG 12228 / 1C / PRS 101 / PAO1).